Reading from the N-terminus, the 320-residue chain is Short-chain dehydrogenase TIC 32 A, chloroplastic (320 aa).

NADP(+) is bound by residues 40-46 (GGTSGIG), 92-93 (DL), N119, and T140. Residue S174 participates in substrate binding. Y196 acts as the Proton acceptor in catalysis. Residues 301 to 317 (DTTLADKLWDFSIKLVE) form an interaction with calmodulin region.

This sequence belongs to the short-chain dehydrogenases/reductases (SDR) family. In terms of assembly, part of the Tic complex. In terms of tissue distribution, expressed in the dehiscence zone of developing pods.

The protein localises to the plastid. The protein resides in the chloroplast inner membrane. Its function is as follows. Involved in protein precursor import into chloroplasts. Maybe involved in pod abscission or dehiscence (pod shatter). The sequence is that of Short-chain dehydrogenase TIC 32 A, chloroplastic from Brassica napus (Rape).